Consider the following 172-residue polypeptide: Small ribosomal subunit protein uS5 (172 aa).

Residues 17–80 enclose the S5 DRBM domain; it reads LKEKMIAVNR…EEARRNMTKV (64 aa).

Belongs to the universal ribosomal protein uS5 family. In terms of assembly, part of the 30S ribosomal subunit. Contacts proteins S4 and S8.

In terms of biological role, with S4 and S12 plays an important role in translational accuracy. Functionally, located at the back of the 30S subunit body where it stabilizes the conformation of the head with respect to the body. The sequence is that of Small ribosomal subunit protein uS5 from Polaromonas sp. (strain JS666 / ATCC BAA-500).